The chain runs to 344 residues: MKALSKQESRAGIWMVDTEVPRPGPNDLLIRVKKGSICGTDVHIYKWDEWAQKTIPVPMVVGHEYVGVVAAMGSEVRGFNVGDRVSGEGHVTCGHCRNCRAGRRHLCRNTLGVGVNRPGSFAEYLVLPAFNAFKLPDDIPDDVAAIFDPFGNAVHTALSFDLVGEDVLVTGAGPIGVMAAAVARHVGARNVVITDINDYRLDLARKMGVTRAVNVTKEDLWSVARNELGMTEGFDVGLEMSGSGPAFAQMVDVMNNGGKIALLGIPSGDVRIDWNAVIFKMLTIKGIYGREMFETWYKMAALIQSGLDLRPIITHHFGIDDFQQGFDAMLSGQSGKVILDWEKR.

Position 38 (Cys38) interacts with Zn(2+). Residues Thr40 and His43 each act as charge relay system in the active site. Zn(2+)-binding residues include His63, Glu64, Cys93, Cys96, Cys99, and Cys107. NAD(+) contacts are provided by residues Ile175, Asp195, Arg200, 263-265 (LGI), and 287-288 (IY).

It belongs to the zinc-containing alcohol dehydrogenase family. As to quaternary structure, homotetramer. The cofactor is Zn(2+).

The protein resides in the cytoplasm. The enzyme catalyses L-threonine + NAD(+) = (2S)-2-amino-3-oxobutanoate + NADH + H(+). The protein operates within amino-acid degradation; L-threonine degradation via oxydo-reductase pathway; glycine from L-threonine: step 1/2. Its function is as follows. Catalyzes the NAD(+)-dependent oxidation of L-threonine to 2-amino-3-ketobutyrate. This is L-threonine 3-dehydrogenase from Deinococcus deserti (strain DSM 17065 / CIP 109153 / LMG 22923 / VCD115).